Reading from the N-terminus, the 158-residue chain is UPF0311 protein CA_C3321 (158 aa).

Belongs to the UPF0311 family.

This is UPF0311 protein CA_C3321 from Clostridium acetobutylicum (strain ATCC 824 / DSM 792 / JCM 1419 / IAM 19013 / LMG 5710 / NBRC 13948 / NRRL B-527 / VKM B-1787 / 2291 / W).